We begin with the raw amino-acid sequence, 228 residues long: uncharacterized protein (228 aa).

The next 6 helical transmembrane spans lie at 14-34 (GWYIRGALIANVIIMGFMWLI), 53-73 (FLIIGTFVRAVFIVFGAVLIV), 108-128 (GLTFITILLSNILIAAGFFWL), 148-168 (AVKMAVFAFGAAGTSLVPIFF), 178-198 (TIISSVVIVMLISSTSPGFSI), and 200-220 (SVVYIPLSLAAFGLFFSYMAI).

The protein resides in the cell membrane. This is an uncharacterized protein from Bacillus subtilis (strain 168).